The following is a 204-amino-acid chain: Glycerol-3-phosphate acyltransferase (204 aa).

The next 5 helical transmembrane spans lie at 8-28 (ILIF…CYIF), 53-73 (VPAA…VVIA), 81-101 (FITA…IFFG), 116-136 (FGFS…VAII), and 155-175 (VIFT…IIIL).

This sequence belongs to the PlsY family. As to quaternary structure, probably interacts with PlsX.

The protein resides in the cell inner membrane. It catalyses the reaction an acyl phosphate + sn-glycerol 3-phosphate = a 1-acyl-sn-glycero-3-phosphate + phosphate. It functions in the pathway lipid metabolism; phospholipid metabolism. Functionally, catalyzes the transfer of an acyl group from acyl-phosphate (acyl-PO(4)) to glycerol-3-phosphate (G3P) to form lysophosphatidic acid (LPA). This enzyme utilizes acyl-phosphate as fatty acyl donor, but not acyl-CoA or acyl-ACP. This chain is Glycerol-3-phosphate acyltransferase, found in Francisella tularensis subsp. tularensis (strain FSC 198).